Reading from the N-terminus, the 317-residue chain is MVETQMDKLGFLLNHIGKQVTTKVLSNAHITQTMKEIILENHGVDGGAAKNVSKGKSSPKEKKHWTEFESWEQLSKSKRSFKEYWAERNEIVNTLLLNWDNVRGAIKKFLDDDREWCGRINMINGVPEIVEIIPSPYRAGENIYFGSEAMMPADIYSRVANKPAMFVFHTHPNLGSCCGGMPSICDISTTLRYLLMGWTAGHLIISSNQVGMLTVDKRIIVDLWANENPRWLMAQKILDIFMMLTSRRSLVNPWTLRDLKKILQDYGIEYIIFPSNDFFIYEDERLLMFSKKWTNFFTLHELLDDLETIETKASSTT.

The protein belongs to the asfivirus F317L family.

The protein resides in the virion. This is an uncharacterized protein from African swine fever virus (strain Badajoz 1971 Vero-adapted) (Ba71V).